A 333-amino-acid polypeptide reads, in one-letter code: Protoheme IX farnesyltransferase (333 aa).

Helical transmembrane passes span 36–56 (LIPLLLATTLGGMALTEGWPL), 61–81 (LVCTLGGGALAAAAAGVLNCL), 107–127 (AAFAGAVSCALAAATLLVSGV), 130–150 (LAAGLSLLGLCSYVLLYTALL), 158–178 (IVIGGVAGAIPPLVGAAAATG), 186–206 (WLFALVMVWTPAHFWALALLL), 243–263 (FLGVWALPEGGLLYGLLLLPF), and 284–304 (AKGLFRWSILYLFGICLLLVF).

It belongs to the UbiA prenyltransferase family. Protoheme IX farnesyltransferase subfamily.

It is found in the cell inner membrane. The catalysed reaction is heme b + (2E,6E)-farnesyl diphosphate + H2O = Fe(II)-heme o + diphosphate. It participates in porphyrin-containing compound metabolism; heme O biosynthesis; heme O from protoheme: step 1/1. Its function is as follows. Converts heme B (protoheme IX) to heme O by substitution of the vinyl group on carbon 2 of heme B porphyrin ring with a hydroxyethyl farnesyl side group. The sequence is that of Protoheme IX farnesyltransferase from Synechococcus sp. (strain WH7803).